The sequence spans 335 residues: GTPase Obg (335 aa).

An Obg domain is found at 1–159 (MKFVDSAKIS…IELEMELKLM (159 aa)). The 164-residue stretch at 160–323 (ADVGLVGFPN…LKDELWRQIS (164 aa)) folds into the OBG-type G domain. Residues 166-173 (GFPNAGKS), 191-195 (FTTLV), 213-216 (DIPG), 280-283 (TKMD), and 304-306 (SSV) each bind GTP. 2 residues coordinate Mg(2+): serine 173 and threonine 193.

It belongs to the TRAFAC class OBG-HflX-like GTPase superfamily. OBG GTPase family. As to quaternary structure, monomer. Requires Mg(2+) as cofactor.

It localises to the cytoplasm. An essential GTPase which binds GTP, GDP and possibly (p)ppGpp with moderate affinity, with high nucleotide exchange rates and a fairly low GTP hydrolysis rate. Plays a role in control of the cell cycle, stress response, ribosome biogenesis and in those bacteria that undergo differentiation, in morphogenesis control. The sequence is that of GTPase Obg from Chlorobaculum parvum (strain DSM 263 / NCIMB 8327) (Chlorobium vibrioforme subsp. thiosulfatophilum).